The chain runs to 422 residues: Keratin, type I cytoskeletal 23 (422 aa).

Residues 1–13 are compositionally biased toward polar residues; it reads MNSGHSFSQTPSA. The tract at residues 1–71 is head; the sequence is MNSGHSFSQT…GRSSPLLGGN (71 aa). The disordered stretch occupies residues 1-73; it reads MNSGHSFSQT…SSPLLGGNGK (73 aa). Residues 72–107 are coil 1A; that stretch reads GKATMQNLNDRLASYLEKVRALEEANMKLESRILKW. The region spanning 72–382 is the IF rod domain; the sequence is GKATMQNLND…RLLEGESEGT (311 aa). Positions 108-125 are linker 1; the sequence is HQQRDPGSKKDYSQYEEN. The coil 1B stretch occupies residues 126–217; that stretch reads ITHLQEQIVD…KHHEQEMEKH (92 aa). Residues 218-240 are linker 12; sequence HVPSDFNVNVKVDTGPREDLIKV. A coil 2 region spans residues 241-378; sequence LEDMRQEYEL…TTYRRLLEGE (138 aa). Residues 379–422 form a rod-like helical tail region; it reads SEGTREESKSSMKVSATPKIKAITQETINGRLVLCQVNEIQKHA.

The protein belongs to the intermediate filament family. In terms of assembly, heterotetramer of two type I and two type II keratins.

In Homo sapiens (Human), this protein is Keratin, type I cytoskeletal 23 (KRT23).